A 208-amino-acid polypeptide reads, in one-letter code: Imidazoleglycerol-phosphate dehydratase (208 aa).

Residues 1–20 (MSRRATVKAPRAGAAARRGA) are disordered. The span at 7–19 (VKAPRAGAAARRG) shows a compositional bias: low complexity.

The protein belongs to the imidazoleglycerol-phosphate dehydratase family.

The protein localises to the cytoplasm. The catalysed reaction is D-erythro-1-(imidazol-4-yl)glycerol 3-phosphate = 3-(imidazol-4-yl)-2-oxopropyl phosphate + H2O. It participates in amino-acid biosynthesis; L-histidine biosynthesis; L-histidine from 5-phospho-alpha-D-ribose 1-diphosphate: step 6/9. The sequence is that of Imidazoleglycerol-phosphate dehydratase from Anaeromyxobacter sp. (strain K).